The sequence spans 122 residues: Acidic phospholipase A2 (122 aa).

7 cysteine pairs are disulfide-bonded: C26–C115, C28–C44, C43–C95, C49–C122, C50–C88, C57–C81, and C75–C86. Residues Y27, G29, and G31 each coordinate Ca(2+). Residue H47 is part of the active site. D48 is a binding site for Ca(2+). The active site involves D89.

In terms of assembly, may form tetramers. Ca(2+) serves as cofactor. In terms of tissue distribution, expressed by the venom gland.

It is found in the secreted. It carries out the reaction a 1,2-diacyl-sn-glycero-3-phosphocholine + H2O = a 1-acyl-sn-glycero-3-phosphocholine + a fatty acid + H(+). PLA2 catalyzes the calcium-dependent hydrolysis of the 2-acyl groups in 3-sn-phosphoglycerides. In vivo, is non-lethal to mice when intravenously injected up to a concentration of 30 ug, however does show significant edematogenic activity at the injection site. This is Acidic phospholipase A2 from Lachesis acrochorda (Chocoan bushmaster).